The sequence spans 237 residues: Uridylate kinase (237 aa).

Position 11 to 14 (11 to 14) interacts with ATP; the sequence is KLSG. Gly53 is a UMP binding site. The ATP site is built by Gly54 and Arg58. Residues Asp73 and 134-141 each bind UMP; that span reads TGNPFFTT. ATP-binding residues include Thr161, Tyr167, and Asp170.

It belongs to the UMP kinase family. As to quaternary structure, homohexamer.

Its subcellular location is the cytoplasm. The enzyme catalyses UMP + ATP = UDP + ADP. Its pathway is pyrimidine metabolism; CTP biosynthesis via de novo pathway; UDP from UMP (UMPK route): step 1/1. Its activity is regulated as follows. Inhibited by UTP. In terms of biological role, catalyzes the reversible phosphorylation of UMP to UDP. The chain is Uridylate kinase from Nitrosomonas europaea (strain ATCC 19718 / CIP 103999 / KCTC 2705 / NBRC 14298).